Here is a 214-residue protein sequence, read N- to C-terminus: Urease accessory protein UreG 2 (214 aa).

22–29 (GPVGSGKT) is a binding site for GTP.

The protein belongs to the SIMIBI class G3E GTPase family. UreG subfamily. Homodimer. UreD, UreF and UreG form a complex that acts as a GTP-hydrolysis-dependent molecular chaperone, activating the urease apoprotein by helping to assemble the nickel containing metallocenter of UreC. The UreE protein probably delivers the nickel.

The protein resides in the cytoplasm. In terms of biological role, facilitates the functional incorporation of the urease nickel metallocenter. This process requires GTP hydrolysis, probably effectuated by UreG. In Bradyrhizobium sp. (strain BTAi1 / ATCC BAA-1182), this protein is Urease accessory protein UreG 2.